Consider the following 725-residue polypeptide: Catalase-peroxidase (725 aa).

A disordered region spans residues Met-1–Gln-20. Residues Trp-91–Tyr-215 constitute a cross-link (tryptophyl-tyrosyl-methioninium (Trp-Tyr) (with M-241)). Catalysis depends on His-92, which acts as the Proton acceptor. Positions Tyr-215–Met-241 form a cross-link, tryptophyl-tyrosyl-methioninium (Tyr-Met) (with W-91). His-256 contributes to the heme b binding site.

It belongs to the peroxidase family. Peroxidase/catalase subfamily. Homodimer or homotetramer. Requires heme b as cofactor. Post-translationally, formation of the three residue Trp-Tyr-Met cross-link is important for the catalase, but not the peroxidase activity of the enzyme.

It catalyses the reaction H2O2 + AH2 = A + 2 H2O. The enzyme catalyses 2 H2O2 = O2 + 2 H2O. Its function is as follows. Bifunctional enzyme with both catalase and broad-spectrum peroxidase activity. In Janthinobacterium sp. (strain Marseille) (Minibacterium massiliensis), this protein is Catalase-peroxidase.